We begin with the raw amino-acid sequence, 185 residues long: Stathmin-4 (185 aa).

Residues 48–185 form the SLD domain; that stretch reads SDMEVIELNK…EVRKNKEATR (138 aa). Positions 90–185 form a coiled coil; the sequence is SLEEIQKKLE…EVRKNKEATR (96 aa). A disordered region spans residues 165-185; sequence ERLQEKDKHAEEVRKNKEATR. Positions 166–185 are enriched in basic and acidic residues; sequence RLQEKDKHAEEVRKNKEATR.

This sequence belongs to the stathmin family. As to expression, nervous tissue.

This Xenopus laevis (African clawed frog) protein is Stathmin-4 (stmn4).